A 490-amino-acid polypeptide reads, in one-letter code: Homoserine O-acetyltransferase (490 aa).

The 307-residue stretch at 48–354 (NVILVCHALT…NSEYGHDAFL (307 aa)) folds into the AB hydrolase-1 domain. Ser153 serves as the catalytic Nucleophile. Substrate is bound at residue Arg223. Active-site residues include Asp317 and His350. Asp351 lines the substrate pocket. 2 consecutive CBS domains span residues 377 to 434 (MSHT…ANSI) and 438 to 490 (MTKN…LYEK).

This sequence belongs to the AB hydrolase superfamily. MetX family. As to quaternary structure, homodimer.

Its subcellular location is the cytoplasm. It carries out the reaction L-homoserine + acetyl-CoA = O-acetyl-L-homoserine + CoA. It functions in the pathway amino-acid biosynthesis; L-methionine biosynthesis via de novo pathway; O-acetyl-L-homoserine from L-homoserine: step 1/1. Functionally, transfers an acetyl group from acetyl-CoA to L-homoserine, forming acetyl-L-homoserine. This is Homoserine O-acetyltransferase from Methanosphaera stadtmanae (strain ATCC 43021 / DSM 3091 / JCM 11832 / MCB-3).